Here is a 311-residue protein sequence, read N- to C-terminus: Pyrimidine-specific ribonucleoside hydrolase RihA (311 aa).

Residue histidine 240 is part of the active site.

This sequence belongs to the IUNH family. RihA subfamily.

Hydrolyzes with equal efficiency cytidine or uridine to ribose and cytosine or uracil, respectively. In Escherichia coli O45:K1 (strain S88 / ExPEC), this protein is Pyrimidine-specific ribonucleoside hydrolase RihA.